The chain runs to 95 residues: MSVDLATVKRVARLARIAVSDEEAERMTGELNGILGFVEQLSEVDVDGVEPMTSVMPMKMKKRDDIVADGDKADDIVANAPNSDRNFFLVPKVVE.

This sequence belongs to the GatC family. As to quaternary structure, heterotrimer of A, B and C subunits.

The catalysed reaction is L-glutamyl-tRNA(Gln) + L-glutamine + ATP + H2O = L-glutaminyl-tRNA(Gln) + L-glutamate + ADP + phosphate + H(+). It catalyses the reaction L-aspartyl-tRNA(Asn) + L-glutamine + ATP + H2O = L-asparaginyl-tRNA(Asn) + L-glutamate + ADP + phosphate + 2 H(+). Its function is as follows. Allows the formation of correctly charged Asn-tRNA(Asn) or Gln-tRNA(Gln) through the transamidation of misacylated Asp-tRNA(Asn) or Glu-tRNA(Gln) in organisms which lack either or both of asparaginyl-tRNA or glutaminyl-tRNA synthetases. The reaction takes place in the presence of glutamine and ATP through an activated phospho-Asp-tRNA(Asn) or phospho-Glu-tRNA(Gln). This Rhizobium meliloti (strain 1021) (Ensifer meliloti) protein is Glutamyl-tRNA(Gln) amidotransferase subunit C.